The chain runs to 113 residues: Histone H3-8 (113 aa).

A compositionally biased stretch (basic residues) spans N1 to R17. Positions N1–H31 are disordered.

The protein belongs to the histone H3 family. The nucleosome is a histone octamer containing two molecules each of H2A, H2B, H3 and H4 assembled in one H3-H4 heterotetramer and two H2A-H2B heterodimers. The octamer wraps approximately 147 bp of DNA.

The protein resides in the nucleus. Its subcellular location is the chromosome. In terms of biological role, core component of nucleosome. Nucleosomes wrap and compact DNA into chromatin, limiting DNA accessibility to the cellular machineries which require DNA as a template. Histones thereby play a central role in transcription regulation, DNA repair, DNA replication and chromosomal stability. DNA accessibility is regulated via a complex set of post-translational modifications of histones, also called histone code, and nucleosome remodeling. The chain is Histone H3-8 (H3-8) from Stylonychia lemnae (Ciliate).